The chain runs to 114 residues: Eukaryotic translation initiation factor 6 (114 aa).

Belongs to the eIF-6 family. In terms of assembly, monomer. Associates with the 60S ribosomal subunit.

It localises to the cytoplasm. It is found in the nucleus. Its subcellular location is the nucleolus. In terms of biological role, binds to the 60S ribosomal subunit and prevents its association with the 40S ribosomal subunit to form the 80S initiation complex in the cytoplasm. May also be involved in ribosome biogenesis. The sequence is that of Eukaryotic translation initiation factor 6 from Trypanosoma cruzi.